A 181-amino-acid chain; its full sequence is Ribulose bisphosphate carboxylase small subunit, chloroplastic 2 (181 aa).

A chloroplast-targeting transit peptide spans 1-54 (MASSMLSSAAVVTSPAQATMVAPFTGLKSSAAFPVTRKANNDITSIASNGGRVS).

This sequence belongs to the RuBisCO small chain family. In terms of assembly, heterohexadecamer of 8 large and 8 small subunits.

Its subcellular location is the plastid. The protein resides in the chloroplast. In terms of biological role, ruBisCO catalyzes two reactions: the carboxylation of D-ribulose 1,5-bisphosphate, the primary event in carbon dioxide fixation, as well as the oxidative fragmentation of the pentose substrate. Both reactions occur simultaneously and in competition at the same active site. Although the small subunit is not catalytic it is essential for maximal activity. This is Ribulose bisphosphate carboxylase small subunit, chloroplastic 2 from Brassica napus (Rape).